Reading from the N-terminus, the 49-residue chain is Large ribosomal subunit protein bL33A (49 aa).

This sequence belongs to the bacterial ribosomal protein bL33 family.

The chain is Large ribosomal subunit protein bL33A (rpmG1) from Enterococcus faecalis (strain ATCC 700802 / V583).